The primary structure comprises 332 residues: Cell growth regulator with RING finger domain protein 1 (332 aa).

An RING-type zinc finger spans residues 274–309 (CVVCQNGTVNWVLLPCRHTCLCDGCVKYFQQCPMCR).

In terms of tissue distribution, ubiquitously expressed with high expression in testis and the cerebellum.

The protein resides in the nucleus. It is found in the endoplasmic reticulum. Its function is as follows. Able to inhibit growth in several cell lines. The chain is Cell growth regulator with RING finger domain protein 1 (CGRRF1) from Homo sapiens (Human).